Reading from the N-terminus, the 292-residue chain is Trimeric intracellular cation channel type B (292 aa).

The Lumenal portion of the chain corresponds to 1–16 (MEYPWDDLTLAFSRTS). Residues 17 to 34 (MFPFFDIAHYLVSVMALK) traverse the membrane as a helical segment. Topologically, residues 35-47 (QRPGAVAAAWNNP) are cytoplasmic. A helical transmembrane segment spans residues 48-69 (LASWLSAMLHCFGGGILSCMLL). The Lumenal portion of the chain corresponds to 70 to 82 (AESPLKFLTNHTN). A helical membrane pass occupies residues 83 to 100 (ILLASSIWYIVFFCPRDL). Over 101 to 103 (VSQ) the chain is Cytoplasmic. The chain crosses the membrane as a helical span at residues 104 to 122 (GYSYQPIQFLAAGMKEVTR). A 1,2-diacyl-sn-glycero-3-phospho-(1D-myo-inositol-4,5-bisphosphate) contacts are provided by lysine 118 and arginine 122. The Lumenal segment spans residues 123–140 (TWKIVGGVSDANSYYRNA). A helical transmembrane segment spans residues 141–158 (WIVMIVVGWARGAGGAVV). The Cytoplasmic segment spans residues 159-178 (TACEQLLKGDWKPEGDEWLK). The helical transmembrane segment at 179–195 (MSFPCKITLLGSIMFTF) threads the bilayer. The Lumenal segment spans residues 196–206 (QHTRHLAISKH). A helical membrane pass occupies residues 207-225 (DLMFLYTIFLVTIKVTMMM). Residues 226–292 (TKDTAVTLTP…GAKRHAKKED (67 aa)) lie on the Cytoplasmic side of the membrane. Residues 248-292 (RQQQQFSSSEKKTEVKPSSNGSASSASKRGAEPSGGAKRHAKKED) form a disordered region. The span at 265–274 (SSNGSASSAS) shows a compositional bias: low complexity.

Belongs to the TMEM38 family. As to quaternary structure, homotrimer; conformation seems to be controled by binding to diacylglycerol (DAG). As to expression, widely expressed.

It localises to the endoplasmic reticulum membrane. It carries out the reaction K(+)(in) = K(+)(out). Its activity is regulated as follows. Channel activity is activated by increased cytosolic Ca(2+) levels and blocked by luminal high Ca(2+) levels. Intracellular monovalent cation channel required for maintenance of rapid intracellular calcium release. Acts as a potassium counter-ion channel that functions in synchronization with calcium release from intracellular stores. Activated by increased cytosolic Ca(2+) levels. This is Trimeric intracellular cation channel type B (Tmem38b) from Mus musculus (Mouse).